Reading from the N-terminus, the 308-residue chain is Ribose 1,5-bisphosphate isomerase (308 aa).

Substrate contacts are provided by residues R24–G27 and R67. Residue C129 is the Proton acceptor of the active site. The Proton donor role is filled by D198. Substrate is bound by residues N208–K209 and K234.

This sequence belongs to the eIF-2B alpha/beta/delta subunits family. R15P isomerase subfamily.

It catalyses the reaction alpha-D-ribose 1,5-bisphosphate = D-ribulose 1,5-bisphosphate. In terms of biological role, catalyzes the isomerization of ribose 1,5-bisphosphate (R15P) to ribulose 1,5-bisphosphate (RuBP), the CO(2) acceptor and substrate for RubisCO. Functions in an archaeal AMP degradation pathway, together with AMP phosphorylase and RubisCO. The protein is Ribose 1,5-bisphosphate isomerase of Methanocaldococcus jannaschii (strain ATCC 43067 / DSM 2661 / JAL-1 / JCM 10045 / NBRC 100440) (Methanococcus jannaschii).